The chain runs to 243 residues: Large ribosomal subunit protein uL3 (243 aa).

Disordered regions lie at residues 139-164 and 218-243; these read VSHR…KMPG and KPGK…QEGV. An N5-methylglutamine modification is found at glutamine 151. Positions 231–243 are enriched in low complexity; sequence QTAAAPAAEQEGV.

Belongs to the universal ribosomal protein uL3 family. In terms of assembly, part of the 50S ribosomal subunit. Forms a cluster with proteins L14 and L19. In terms of processing, methylated by PrmB.

One of the primary rRNA binding proteins, it binds directly near the 3'-end of the 23S rRNA, where it nucleates assembly of the 50S subunit. The protein is Large ribosomal subunit protein uL3 of Rhodopseudomonas palustris (strain BisB18).